A 250-amino-acid polypeptide reads, in one-letter code: Cellulose biosynthesis protein BcsQ (250 aa).

Residue 9–16 coordinates ATP; it reads VRGGVGTT.

The protein belongs to the BcsQ family.

It is found in the cytoplasm. Functionally, essential for cellulose biosynthesis, shown for strain 1094, a commensal, natural cellulose producer. Also shown in strain W3110 which has a restored reading frame (TAG stop codon to TTG for amino acid 6, called strain AR3110), this protein. May play a role in subcellular localization of an active cellulose biosynthesis apparatus at the bacterial cell pole. The combination of cellulose and the curli fiber network confer cohesion, elasticity and tissue-like properties to colonies. This Escherichia coli (strain K12) protein is Cellulose biosynthesis protein BcsQ.